Here is a 376-residue protein sequence, read N- to C-terminus: DNA methyltransferase CcrM (376 aa).

Residues 273 to 370 form the RAMA domain; that stretch reads KATLSVMTGK…IDELRSVIRN (98 aa).

It belongs to the N(4)/N(6)-methyltransferase family.

It catalyses the reaction a 2'-deoxyadenosine in DNA + S-adenosyl-L-methionine = an N(6)-methyl-2'-deoxyadenosine in DNA + S-adenosyl-L-homocysteine + H(+). Its function is as follows. A beta subtype methylase that recognizes the double-stranded sequence 5'-GANTC-3' and methylates A-2 on both strands. Overexpression leads to many branched and bloated cells, two to three times the size of wild-type cells, and cells that have 1-3 times the normal amount of DNA. Contributes to the accurate cell-cycle control of DNA replication and cellular morphology. Can fully replace its ortholog in C.crescentus. The protein is DNA methyltransferase CcrM (smeIM) of Rhizobium meliloti (strain 1021) (Ensifer meliloti).